A 272-amino-acid polypeptide reads, in one-letter code: Glutamate racemase (272 aa).

Residues 13 to 14 (DS) and 45 to 46 (YG) each bind substrate. The active-site Proton donor/acceptor is the cysteine 76. 77–78 (NT) provides a ligand contact to substrate. Cysteine 187 acts as the Proton donor/acceptor in catalysis. 188–189 (TH) contacts substrate.

It belongs to the aspartate/glutamate racemases family.

The enzyme catalyses L-glutamate = D-glutamate. Its pathway is cell wall biogenesis; peptidoglycan biosynthesis. Functionally, provides the (R)-glutamate required for cell wall biosynthesis. This Roseiflexus sp. (strain RS-1) protein is Glutamate racemase.